We begin with the raw amino-acid sequence, 330 residues long: Aspartate--ammonia ligase (330 aa).

It belongs to the class-II aminoacyl-tRNA synthetase family. AsnA subfamily.

It is found in the cytoplasm. The catalysed reaction is L-aspartate + NH4(+) + ATP = L-asparagine + AMP + diphosphate + H(+). Its pathway is amino-acid biosynthesis; L-asparagine biosynthesis; L-asparagine from L-aspartate (ammonia route): step 1/1. The sequence is that of Aspartate--ammonia ligase from Edwardsiella ictaluri (strain 93-146).